Consider the following 473-residue polypeptide: Lactococcin A secretion protein LcnD-like (473 aa).

The Cytoplasmic segment spans residues 1-21 (MFDKKLLESSELYDKRYRNFS). Residues 22–44 (TLIILPLFILLVGGVIFTFFAHK) form a helical membrane-spanning segment. The Extracellular portion of the chain corresponds to 45–473 (ELTVISTGSI…FLDKIMGRTS (429 aa)).

It belongs to the membrane fusion protein (MFP) (TC 8.A.1) family.

Its subcellular location is the cell membrane. Involved in the secretion of a lactococcin. This is Lactococcin A secretion protein LcnD-like (lcnD) from Lactococcus lactis subsp. lactis (strain IL1403) (Streptococcus lactis).